Here is a 175-residue protein sequence, read N- to C-terminus: MDRAAKADLVASLNEVFSTTSLVVVAHYKGLTVADMQKLRRQMKQAGATVKVAKNRLANIALDGTNVASIKPLLKGPTLLAYSSDPVAAAKVAVDFAKGNDKLVILGGAMGATALNPDGVKALATLPSLDELRAKIVGLVQAPATKIAQVVNAPAAKLARVFGAYADTANKDEAA.

The protein belongs to the universal ribosomal protein uL10 family. As to quaternary structure, part of the ribosomal stalk of the 50S ribosomal subunit. The N-terminus interacts with L11 and the large rRNA to form the base of the stalk. The C-terminus forms an elongated spine to which L12 dimers bind in a sequential fashion forming a multimeric L10(L12)X complex.

Functionally, forms part of the ribosomal stalk, playing a central role in the interaction of the ribosome with GTP-bound translation factors. The sequence is that of Large ribosomal subunit protein uL10 from Methylobacterium sp. (strain 4-46).